A 255-amino-acid chain; its full sequence is 5'-nucleotidase SurE (255 aa).

A divalent metal cation is bound by residues Asp8, Asp9, Ser40, and Asn93.

Belongs to the SurE nucleotidase family. A divalent metal cation is required as a cofactor.

It localises to the cytoplasm. The catalysed reaction is a ribonucleoside 5'-phosphate + H2O = a ribonucleoside + phosphate. Nucleotidase that shows phosphatase activity on nucleoside 5'-monophosphates. The sequence is that of 5'-nucleotidase SurE from Rhodopseudomonas palustris (strain BisB18).